A 98-amino-acid polypeptide reads, in one-letter code: Feather keratin 2 (98 aa).

Ser2 carries the post-translational modification N-acetylserine.

This sequence belongs to the avian keratin family. As to quaternary structure, the avian keratins (F-ker, S-ker, C-ker and B-ker) are a complex mixture of very similar polypeptides.

The sequence is that of Feather keratin 2 from Gallus gallus (Chicken).